Consider the following 212-residue polypeptide: Large ribosomal subunit protein uL3 (212 aa).

An N5-methylglutamine modification is found at glutamine 153.

The protein belongs to the universal ribosomal protein uL3 family. In terms of assembly, part of the 50S ribosomal subunit. Forms a cluster with proteins L14 and L19. In terms of processing, methylated by PrmB.

One of the primary rRNA binding proteins, it binds directly near the 3'-end of the 23S rRNA, where it nucleates assembly of the 50S subunit. This Shewanella piezotolerans (strain WP3 / JCM 13877) protein is Large ribosomal subunit protein uL3.